The following is an 83-amino-acid chain: Small ribosomal subunit protein bS16 (83 aa).

Belongs to the bacterial ribosomal protein bS16 family.

The chain is Small ribosomal subunit protein bS16 from Pseudomonas fluorescens (strain SBW25).